Here is a 165-residue protein sequence, read N- to C-terminus: Transcriptional repressor NrdR (165 aa).

Residues 3-34 (CPFCGAQDTRVVDSRLSHEGDQVRRRRECGEC) fold into a zinc finger. In terms of domain architecture, ATP-cone spans 49 to 139 (PRVVKSDGSR…VYRRFEDVNQ (91 aa)).

The protein belongs to the NrdR family. Requires Zn(2+) as cofactor.

Functionally, negatively regulates transcription of bacterial ribonucleotide reductase nrd genes and operons by binding to NrdR-boxes. The protein is Transcriptional repressor NrdR of Methylococcus capsulatus (strain ATCC 33009 / NCIMB 11132 / Bath).